We begin with the raw amino-acid sequence, 332 residues long: HTH-type transcriptional regulator RegA (332 aa).

One can recognise an HTH lacI-type domain in the interval M1–T57. Positions I5 to N24 form a DNA-binding region, H-T-H motif.

Involved in the regulation of amylase production. In Clostridium saccharobutylicum, this protein is HTH-type transcriptional regulator RegA (regA).